The following is a 240-amino-acid chain: UPF0502 protein Veis_2102 (240 aa).

It belongs to the UPF0502 family.

The chain is UPF0502 protein Veis_2102 from Verminephrobacter eiseniae (strain EF01-2).